Consider the following 251-residue polypeptide: Ribonuclease 3 (251 aa).

An RNase III domain is found at 3–125 (LATLETRLGH…LFGAVFLDAG (123 aa)). Mg(2+) is bound at residue glutamate 38. Aspartate 42 is an active-site residue. Residues aspartate 111 and glutamate 114 each coordinate Mg(2+). Glutamate 114 is an active-site residue. In terms of domain architecture, DRBM spans 152 to 222 (DAKTLLQEFL…AKLALEAALV (71 aa)).

Belongs to the ribonuclease III family. As to quaternary structure, homodimer. The cofactor is Mg(2+).

It is found in the cytoplasm. The enzyme catalyses Endonucleolytic cleavage to 5'-phosphomonoester.. Digests double-stranded RNA. Involved in the processing of primary rRNA transcript to yield the immediate precursors to the large and small rRNAs (23S and 16S). Processes some mRNAs, and tRNAs when they are encoded in the rRNA operon. Processes pre-crRNA and tracrRNA of type II CRISPR loci if present in the organism. The sequence is that of Ribonuclease 3 from Bordetella avium (strain 197N).